The primary structure comprises 339 residues: Phosphate acyltransferase (339 aa).

Belongs to the PlsX family. Homodimer. Probably interacts with PlsY.

The protein resides in the cytoplasm. It carries out the reaction a fatty acyl-[ACP] + phosphate = an acyl phosphate + holo-[ACP]. Its pathway is lipid metabolism; phospholipid metabolism. In terms of biological role, catalyzes the reversible formation of acyl-phosphate (acyl-PO(4)) from acyl-[acyl-carrier-protein] (acyl-ACP). This enzyme utilizes acyl-ACP as fatty acyl donor, but not acyl-CoA. This is Phosphate acyltransferase from Helicobacter acinonychis (strain Sheeba).